Reading from the N-terminus, the 686-residue chain is X-linked interleukin-1 receptor accessory protein-like 2 (686 aa).

An N-terminal signal peptide occupies residues 1 to 16 (MKLPLLLALVVCSAVS). At 17-354 (TNLKMVSKRN…LLRKKDLIYK (338 aa)) the chain is on the extracellular side. In terms of domain architecture, Ig-like C2-type 1 spans 32-132 (IDWSVDLKTY…YCMKVSMSLT (101 aa)). Cys-53 and Cys-116 are oxidised to a cystine. 5 N-linked (GlcNAc...) asparagine glycosylation sites follow: Asn-63, Asn-120, Asn-136, Asn-211, and Asn-328. Ig-like C2-type domains lie at 141–232 (CYNS…LKVT) and 239–347 (PPKP…VLLR). 2 disulfides stabilise this stretch: Cys-162–Cys-214 and Cys-265–Cys-331. Residues 355–375 (IELAGGLGAIFLLLILLLVVY) traverse the membrane as a helical segment. The Cytoplasmic segment spans residues 376-686 (KCYNIELMLF…KELSFTSDIW (311 aa)). Residues 400–556 (KEYDAYLSYT…KFWKHLVYEM (157 aa)) form the TIR domain. The active site involves Glu-488.

It belongs to the interleukin-1 receptor family. Detected in fetal brain after day 12.5, in particular in parts of the diencephalon and in the basal plate of the spinal cord. In postnatal brain detected in cerebral cortex, olfactory bulb, in the CA1 region of the hippocampus and in Purkinje cells of the Xth cerebellar lobule.

It is found in the membrane. The enzyme catalyses NAD(+) + H2O = ADP-D-ribose + nicotinamide + H(+). This chain is X-linked interleukin-1 receptor accessory protein-like 2 (Il1rapl2), found in Mus musculus (Mouse).